The sequence spans 157 residues: Cyclic pyranopterin monophosphate synthase (157 aa).

Residues 74–76 and 111–112 each bind substrate; these read MCH and ME. Asp-126 is a catalytic residue.

It belongs to the MoaC family. In terms of assembly, homohexamer; trimer of dimers.

The catalysed reaction is (8S)-3',8-cyclo-7,8-dihydroguanosine 5'-triphosphate = cyclic pyranopterin phosphate + diphosphate. Its pathway is cofactor biosynthesis; molybdopterin biosynthesis. Catalyzes the conversion of (8S)-3',8-cyclo-7,8-dihydroguanosine 5'-triphosphate to cyclic pyranopterin monophosphate (cPMP). This Carboxydothermus hydrogenoformans (strain ATCC BAA-161 / DSM 6008 / Z-2901) protein is Cyclic pyranopterin monophosphate synthase.